The following is a 109-amino-acid chain: Large ribosomal subunit protein uL22 (109 aa).

This sequence belongs to the universal ribosomal protein uL22 family. In terms of assembly, part of the 50S ribosomal subunit.

Its function is as follows. This protein binds specifically to 23S rRNA; its binding is stimulated by other ribosomal proteins, e.g. L4, L17, and L20. It is important during the early stages of 50S assembly. It makes multiple contacts with different domains of the 23S rRNA in the assembled 50S subunit and ribosome. In terms of biological role, the globular domain of the protein is located near the polypeptide exit tunnel on the outside of the subunit, while an extended beta-hairpin is found that lines the wall of the exit tunnel in the center of the 70S ribosome. The polypeptide is Large ribosomal subunit protein uL22 (Leptothrix cholodnii (strain ATCC 51168 / LMG 8142 / SP-6) (Leptothrix discophora (strain SP-6))).